We begin with the raw amino-acid sequence, 359 residues long: Peptide chain release factor 1 (359 aa).

Gln236 is subject to N5-methylglutamine.

This sequence belongs to the prokaryotic/mitochondrial release factor family. Post-translationally, methylated by PrmC. Methylation increases the termination efficiency of RF1.

The protein resides in the cytoplasm. Its function is as follows. Peptide chain release factor 1 directs the termination of translation in response to the peptide chain termination codons UAG and UAA. This chain is Peptide chain release factor 1, found in Streptococcus pneumoniae serotype 2 (strain D39 / NCTC 7466).